A 343-amino-acid chain; its full sequence is Glyceraldehyde-3-phosphate dehydrogenase (343 aa).

NAD(+) is bound by residues 11 to 12 (TI) and Gly110. 139 to 141 (SCN) contributes to the D-glyceraldehyde 3-phosphate binding site. Residue Cys140 is the Nucleophile of the active site. Arg168 is a binding site for NAD(+). D-glyceraldehyde 3-phosphate is bound at residue 194–195 (HG). Residue Gln301 participates in NAD(+) binding.

The protein belongs to the glyceraldehyde-3-phosphate dehydrogenase family. Homotetramer.

The protein localises to the cytoplasm. It catalyses the reaction D-glyceraldehyde 3-phosphate + phosphate + NADP(+) = (2R)-3-phospho-glyceroyl phosphate + NADPH + H(+). The enzyme catalyses D-glyceraldehyde 3-phosphate + phosphate + NAD(+) = (2R)-3-phospho-glyceroyl phosphate + NADH + H(+). It participates in carbohydrate degradation; glycolysis; pyruvate from D-glyceraldehyde 3-phosphate: step 1/5. The chain is Glyceraldehyde-3-phosphate dehydrogenase from Methanoregula boonei (strain DSM 21154 / JCM 14090 / 6A8).